The chain runs to 656 residues: MIKSQKEYLERIAYLNTLSHHYYNLDEPIVSDAIYDELYQELKAYEEKNPNGIQANSPTQKVGATTTNSFNKNPHLMRMWSLDDVFNQSELQAWLQRILKAYPSASFVCSPKLDGVSLNLLYQHGKLVKATTRGNGLEGELVSANAKHIANIPHAIAYNGEIEIRGEVIISKKDFDALNQERLNANEPLFANPRNAASGSLRQLDSEITKKRKLQFIPWGVGKHSLNFLSFKECLDFIVSLGFSAIQYLSLNKNHQEIEDNYHTLIREREGFFALLDGMVIVVNELNIQKELGYTQKSPKFACAYKFPALEKHTKIVGVINQVGRSGAITPVALLEPVEIAGAMINRATLHNYSEIEKKNIMLSDRVVVIRSGDVIPKIIKPLESYRDGSQHKIERPKVCPICSHELLCEEIFTYCQNLNCPARLKESLIHFASKDALNIQGLGDKVIEQLFEEKLIFNALDLYALKLEDLMRLDKFKIKKAQNLLDAILKSKNPPLWRLINALGIEHIGKGASKTLAKYGLNVLEKSEAEFLEMEGFGVEMARSLVNFYASNQEFIRSLFELLNPKNSDMAEEKQKSSSVFNNKTIVLTGTLSKPRQEYAQMLENLGAKISSSVSAKTDFLIAGENPGSKLALAQKHGVSVLNEEELLKRLKELD.

NAD(+) is bound by residues 32–36 (DAIYD) and 81–82 (SL). Residue lysine 112 is the N6-AMP-lysine intermediate of the active site. Residues arginine 133, glutamate 167, and lysine 306 each coordinate NAD(+). Zn(2+) contacts are provided by cysteine 400, cysteine 403, cysteine 416, and cysteine 421. One can recognise a BRCT domain in the interval 577 to 656 (KSSSVFNNKT…ELLKRLKELD (80 aa)).

It belongs to the NAD-dependent DNA ligase family. LigA subfamily. Requires Mg(2+) as cofactor. Mn(2+) is required as a cofactor.

The catalysed reaction is NAD(+) + (deoxyribonucleotide)n-3'-hydroxyl + 5'-phospho-(deoxyribonucleotide)m = (deoxyribonucleotide)n+m + AMP + beta-nicotinamide D-nucleotide.. Functionally, DNA ligase that catalyzes the formation of phosphodiester linkages between 5'-phosphoryl and 3'-hydroxyl groups in double-stranded DNA using NAD as a coenzyme and as the energy source for the reaction. It is essential for DNA replication and repair of damaged DNA. The polypeptide is DNA ligase (Helicobacter pylori (strain ATCC 700392 / 26695) (Campylobacter pylori)).